A 182-amino-acid chain; its full sequence is UPF0690 protein C1orf52 homolog (182 aa).

Residues 1–61 are disordered; sequence MAAEEKDPLS…AEKRLPGPDE (61 aa). Positions 23–32 are enriched in acidic residues; the sequence is SDEEDNSEPE. Residues 51-61 are compositionally biased toward basic and acidic residues; it reads KAEKRLPGPDE. Thr-67 carries the phosphothreonine modification. Position 132 is a phosphotyrosine (Tyr-132). Residues 132 to 182 form a disordered region; it reads YEDNGDDAPQNAKKARLLPEGEETVESDDEKDEHTSKKRKIELGEPTKKKK. The span at 151–162 shows a compositional bias: acidic residues; the sequence is EGEETVESDDEK. Position 158 is a phosphoserine (Ser-158). Residues 172 to 182 show a composition bias toward basic and acidic residues; sequence IELGEPTKKKK.

The protein belongs to the UPF0690 family.

The protein is UPF0690 protein C1orf52 homolog of Bos taurus (Bovine).